Consider the following 319-residue polypeptide: Acetyl esterase (319 aa).

An Involved in the stabilization of the negatively charged intermediate by the formation of the oxyanion hole motif is present at residues 91-93; sequence HGG. Catalysis depends on residues S165, D262, and H292.

This sequence belongs to the 'GDXG' lipolytic enzyme family. As to quaternary structure, homodimer. Interacts with MalT and MelA.

Its subcellular location is the cytoplasm. In terms of biological role, displays esterase activity towards short chain fatty esters (acyl chain length of up to 8 carbons). Able to hydrolyze triacetylglycerol (triacetin) and tributyrylglycerol (tributyrin), but not trioleylglycerol (triolein) or cholesterol oleate. Negatively regulates MalT activity by antagonizing maltotriose binding. Inhibits MelA galactosidase activity. This is Acetyl esterase from Escherichia coli O127:H6 (strain E2348/69 / EPEC).